A 251-amino-acid chain; its full sequence is MSVSPVPIVSTPVAVSESPAGSPVQPAVPVTVRWRGSEAYETSFDAMRAFTDTRTADTGDEIWVVEHPPVYTLGQAGDPAHLLVADSGVPLVKVDRGGQITYHGPGQIVVYLLLDLRRRKLMVRTLVTKIEEAVIETLAAYNLASVRKAGAPGIYVASGVHEGAKIAALGLKIRNGCSYHGLSLNVKMDLRPFLAINPCGYAGLETVDMASLEVAADWNDVAHTLVGRLIANLDGESAAADKPQALEHSND.

Positions 56–237 (ADTGDEIWVV…RLIANLDGES (182 aa)) constitute a BPL/LPL catalytic domain. Residues 96–103 (RGGQITYH), 168–170 (ALG), and 181–183 (GLS) each bind substrate. The active-site Acyl-thioester intermediate is the cysteine 199.

It belongs to the LipB family.

It is found in the cytoplasm. The enzyme catalyses octanoyl-[ACP] + L-lysyl-[protein] = N(6)-octanoyl-L-lysyl-[protein] + holo-[ACP] + H(+). The protein operates within protein modification; protein lipoylation via endogenous pathway; protein N(6)-(lipoyl)lysine from octanoyl-[acyl-carrier-protein]: step 1/2. Functionally, catalyzes the transfer of endogenously produced octanoic acid from octanoyl-acyl-carrier-protein onto the lipoyl domains of lipoate-dependent enzymes. Lipoyl-ACP can also act as a substrate although octanoyl-ACP is likely to be the physiological substrate. The chain is Octanoyltransferase from Burkholderia ambifaria (strain MC40-6).